The chain runs to 427 residues: Serine hydroxymethyltransferase (427 aa).

(6S)-5,6,7,8-tetrahydrofolate is bound at residue 120–122 (GHI). At lysine 226 the chain carries N6-(pyridoxal phosphate)lysine.

The protein belongs to the SHMT family. In terms of assembly, homodimer. Pyridoxal 5'-phosphate serves as cofactor.

The protein resides in the cytoplasm. Its pathway is amino-acid biosynthesis; glycine biosynthesis; glycine from L-serine: step 1/1. Its function is as follows. Catalyzes the reversible interconversion of serine and glycine with a modified folate serving as the one-carbon carrier. Also exhibits a pteridine-independent aldolase activity toward beta-hydroxyamino acids, producing glycine and aldehydes, via a retro-aldol mechanism. This is Serine hydroxymethyltransferase from Pyrococcus horikoshii (strain ATCC 700860 / DSM 12428 / JCM 9974 / NBRC 100139 / OT-3).